The chain runs to 454 residues: UDP-N-acetylmuramoylalanine--D-glutamate ligase (454 aa).

ATP is bound at residue 118–124 (GTNGKTT).

Belongs to the MurCDEF family.

It localises to the cytoplasm. The catalysed reaction is UDP-N-acetyl-alpha-D-muramoyl-L-alanine + D-glutamate + ATP = UDP-N-acetyl-alpha-D-muramoyl-L-alanyl-D-glutamate + ADP + phosphate + H(+). It functions in the pathway cell wall biogenesis; peptidoglycan biosynthesis. Functionally, cell wall formation. Catalyzes the addition of glutamate to the nucleotide precursor UDP-N-acetylmuramoyl-L-alanine (UMA). This Thermosynechococcus vestitus (strain NIES-2133 / IAM M-273 / BP-1) protein is UDP-N-acetylmuramoylalanine--D-glutamate ligase.